Reading from the N-terminus, the 642-residue chain is Threonine--tRNA ligase (642 aa).

A TGS domain is found at 1–63 (MNDITVTLPD…YNDARVVIVT (63 aa)). The catalytic stretch occupies residues 242-533 (DHRKIGQELD…LIEHFNGKFP (292 aa)). Positions 334, 385, and 510 each coordinate Zn(2+).

It belongs to the class-II aminoacyl-tRNA synthetase family. As to quaternary structure, homodimer. Zn(2+) serves as cofactor.

The protein resides in the cytoplasm. It catalyses the reaction tRNA(Thr) + L-threonine + ATP = L-threonyl-tRNA(Thr) + AMP + diphosphate + H(+). Functionally, catalyzes the attachment of threonine to tRNA(Thr) in a two-step reaction: L-threonine is first activated by ATP to form Thr-AMP and then transferred to the acceptor end of tRNA(Thr). This is Threonine--tRNA ligase from Haloquadratum walsbyi (strain DSM 16790 / HBSQ001).